Reading from the N-terminus, the 293-residue chain is Acetylglutamate kinase (293 aa).

Substrate is bound by residues 71–72 (GG), R93, and N186.

It belongs to the acetylglutamate kinase family. ArgB subfamily.

The protein resides in the cytoplasm. The catalysed reaction is N-acetyl-L-glutamate + ATP = N-acetyl-L-glutamyl 5-phosphate + ADP. It participates in amino-acid biosynthesis; L-arginine biosynthesis; N(2)-acetyl-L-ornithine from L-glutamate: step 2/4. Functionally, catalyzes the ATP-dependent phosphorylation of N-acetyl-L-glutamate. The polypeptide is Acetylglutamate kinase (Synechococcus sp. (strain WH7803)).